Reading from the N-terminus, the 150-residue chain is uncharacterized protein (150 aa).

The N-terminal stretch at 1 to 23 (MYSILIACLVLLLCLIIYVGHRA) is a signal peptide.

This sequence belongs to the asfivirus EP152R family.

Its subcellular location is the virion. This is an uncharacterized protein from African swine fever virus (isolate Warthog/Namibia/Wart80/1980) (ASFV).